The following is a 296-amino-acid chain: Porphobilinogen deaminase (296 aa).

Residue cysteine 235 is modified to S-(dipyrrolylmethanemethyl)cysteine.

Belongs to the HMBS family. Monomer. It depends on dipyrromethane as a cofactor.

It catalyses the reaction 4 porphobilinogen + H2O = hydroxymethylbilane + 4 NH4(+). It participates in porphyrin-containing compound metabolism; protoporphyrin-IX biosynthesis; coproporphyrinogen-III from 5-aminolevulinate: step 2/4. Tetrapolymerization of the monopyrrole PBG into the hydroxymethylbilane pre-uroporphyrinogen in several discrete steps. In Alkaliphilus oremlandii (strain OhILAs) (Clostridium oremlandii (strain OhILAs)), this protein is Porphobilinogen deaminase.